A 342-amino-acid polypeptide reads, in one-letter code: MLETLRERLLSVQQDFTSGLKTLSDKSREAKAKNKPRTVPCLPKYSAGLELLSRYEDTWAALHRRAKECASAGERVDSEVVMLSAHWEKKQASLRDLQQQLQQLPGLIADLESLTASLTHLEASFEEVENHLLNLEDLCGQCELERHKHMQSQQLENYKKNKRKELETFKAELDAEHSQKVLEMEQTQQLKLKERQKFFEEAFQQDMEQYLSTGYLQIAERREPMGSMSSMEVNVDMLEQMDLMDISDQEALDVFLNSGGEENTLLSPISGPEASPGQDAVTLQVPTPSQAPATPPSSSSPGTDPASRDPSEGGESPVVQSDEEGVEVDTALATLHSDDSDS.

S11 is subject to Phosphoserine. Residues 83–180 (LSAHWEKKQA…AELDAEHSQK (98 aa)) are a coiled coil. The short motif at 243-256 (LMDISDQEALDVFL) is the Nuclear export signal element. The tract at residues 263-342 (NTLLSPISGP…ATLHSDDSDS (80 aa)) is disordered. Residues 286–305 (PTPSQAPATPPSSSSPGTDP) are compositionally biased toward low complexity. Phosphoserine occurs at positions 316, 321, and 340.

Belongs to the dysbindin family. As to quaternary structure, interacts (via its coiled coil domain) with KXD1. Interacts with CMYA5, PI4K2 and RNF151. Component of the biogenesis of lysosome-related organelles complex 1 (BLOC-1) composed of at least BLOC1S1, BLOC1S2, BLOC1S3, BLOC1S4, BLOC1S5, BLOC1S6, DTNBP1/BLOC1S7 and SNAPIN/BLOC1S8. Interacts directly in the complex with BLOC1S5, BLOC1S6 and SNAPIN/BLOC1S8. The BLOC-1 complex associates with the AP-3 protein complex and membrane protein cargos. This BLOC-1 complex also associates with the BLOC-2 complex in endosomes. Binds to DTNA and DTNB but may not be a physiological binding partner. Interacts with the DNA-dependent protein kinase complex DNA-PK; the interaction phosphorylates DTNBP1 in vitro. Interacts directly in this complex with XRCC5 and XRCC6. Interacts with AP3M1, AP3B2 and TRIM32. Interacts with XPO1; the interaction exports DTNBP1 out of the nucleus. In terms of processing, ubiquitinated by TRIM32. Ubiquitination leads to DTNBP1 degradation.

It is found in the cytoplasm. The protein localises to the cytoplasmic vesicle membrane. It localises to the cytoplasmic vesicle. Its subcellular location is the secretory vesicle. The protein resides in the synaptic vesicle membrane. It is found in the endosome membrane. The protein localises to the melanosome membrane. It localises to the nucleus. Its subcellular location is the postsynaptic density. The protein resides in the presynaptic cell membrane. It is found in the endoplasmic reticulum. Component of the BLOC-1 complex, a complex that is required for normal biogenesis of lysosome-related organelles (LRO), such as platelet dense granules and melanosomes. In concert with the AP-3 complex, the BLOC-1 complex is required to target membrane protein cargos into vesicles assembled at cell bodies for delivery into neurites and nerve terminals. The BLOC-1 complex, in association with SNARE proteins, is also proposed to be involved in neurite extension. Associates with the BLOC-2 complex to facilitate the transport of TYRP1 independent of AP-3 function. Plays a role in synaptic vesicle trafficking and in neurotransmitter release. Plays a role in the regulation of cell surface exposure of DRD2. May play a role in actin cytoskeleton reorganization and neurite outgrowth. May modulate MAPK8 phosphorylation. Appears to promote neuronal transmission and viability through regulating the expression of SNAP25 and SYN1, modulating PI3-kinase-Akt signaling and influencing glutamatergic release. Regulates the expression of SYN1 through binding to its promoter. Modulates prefrontal cortical activity via the dopamine/D2 pathway. This is Dysbindin (DTNBP1) from Bos taurus (Bovine).